A 236-amino-acid chain; its full sequence is Small ribosomal subunit protein uS2c (236 aa).

The protein belongs to the universal ribosomal protein uS2 family.

It localises to the plastid. Its subcellular location is the chloroplast. In Draba nemorosa (Woodland whitlowgrass), this protein is Small ribosomal subunit protein uS2c (rps2).